The chain runs to 360 residues: MLRFVRGNLLEAPVEALVNTVNTVGVMGKGVALQFKRAFPDNYQAYVKACERGQVQIGRIFVYDRGPLAQPRYIFNFPTKKHWRHPSRMEYVEEGLKDLVCRIQELRVRSIALPPLGAGNGGLPWPEVKQRIQEALEALEGVEVWVYEPVENPKAHSIVPLKTKPRLTPARAALLKLFGLYGALGEPLGRLEAQKLAYFLQEAGLDLKLDFACKQFGPYAEPLNHVLARLEGHYIQGFGDRTGISQIRLKPQALDEAVLFLADYPKADEAATRAADWVKGFETPYGLELLATVHWAVRHEGARDWASLQKRLQAWNPRKATFPKTHLQVALDALLKRGALRPEEWQDRPPKLPANVAQEA.

Residues 1–155 (MLRFVRGNLL…VYEPVENPKA (155 aa)) enclose the Macro domain. ADP-D-ribose-binding positions include 8 to 9 (NL), 20 to 22 (TVN), 31 to 34 (VALQ), and Thr-79. The active-site Nucleophile is Lys-80. 117-121 (GAGNG) provides a ligand contact to ADP-D-ribose. Residues 167–338 (LTPARAALLK…VALDALLKRG (172 aa)) are interaction with DarT.

Belongs to the DarG ADP-ribosyl glycohydrolase family. In terms of assembly, interacts (via C-terminus) with cognate toxin DarT; this heterodimeric complex neutralizes the toxic effect of DarT by preventing ssDNA binding to DarT and consequently inactivating the toxin by direct protein-protein interactions.

The enzyme catalyses an N-(ADP-alpha-D-ribosyl)-thymidine in DNA + H2O = a thymidine in DNA + ADP-D-ribose. Antitoxin component of the hybrid type II/IV toxin-antitoxin (TA) system DarTG, which plays a crucial role in controlling bacterial growth and bacteriophage infection. De-ADP-ribosylates DNA modified on thymidine by its cognate toxin DarT, which neutralizes the activity of cognate toxin DarT. Upon expression in E.coli neutralizes the effect of cognate toxin DarT. Upon expression in M.tuberculosis neutralizes the toxic effects of endogenous DarT. This Thermus aquaticus (strain ATCC BAA-2747 / Y51MC23) protein is DNA ADP-ribosyl glycohydrolase.